Here is a 378-residue protein sequence, read N- to C-terminus: Erythronate-4-phosphate dehydrogenase (378 aa).

Positions 45 and 66 each coordinate substrate. Residue D146 coordinates NAD(+). R207 is an active-site residue. Position 231 (D231) interacts with NAD(+). The active site involves E236. H253 (proton donor) is an active-site residue. G256 provides a ligand contact to NAD(+).

This sequence belongs to the D-isomer specific 2-hydroxyacid dehydrogenase family. PdxB subfamily. As to quaternary structure, homodimer.

Its subcellular location is the cytoplasm. It carries out the reaction 4-phospho-D-erythronate + NAD(+) = (R)-3-hydroxy-2-oxo-4-phosphooxybutanoate + NADH + H(+). It functions in the pathway cofactor biosynthesis; pyridoxine 5'-phosphate biosynthesis; pyridoxine 5'-phosphate from D-erythrose 4-phosphate: step 2/5. Functionally, catalyzes the oxidation of erythronate-4-phosphate to 3-hydroxy-2-oxo-4-phosphonooxybutanoate. The sequence is that of Erythronate-4-phosphate dehydrogenase from Wigglesworthia glossinidia brevipalpis.